The primary structure comprises 155 residues: Probable adenylyl-sulfate kinase (155 aa).

Residue 9-16 coordinates ATP; the sequence is GPSGAGKT. Ser-83 (phosphoserine intermediate) is an active-site residue. The tract at residues 134–155 is disordered; it reads LDGEYEEPENPEVVVDTDKNDR.

It belongs to the APS kinase family.

It catalyses the reaction adenosine 5'-phosphosulfate + ATP = 3'-phosphoadenylyl sulfate + ADP + H(+). It participates in sulfur metabolism; hydrogen sulfide biosynthesis; sulfite from sulfate: step 2/3. In terms of biological role, catalyzes the synthesis of activated sulfate. This chain is Probable adenylyl-sulfate kinase (cysC), found in Archaeoglobus fulgidus (strain ATCC 49558 / DSM 4304 / JCM 9628 / NBRC 100126 / VC-16).